The following is a 207-amino-acid chain: Glycerol-3-phosphate acyltransferase (207 aa).

The next 5 membrane-spanning stretches (helical) occupy residues 4–24 (VVAT…SFAV), 58–78 (ILTL…AQWL), 86–106 (ETGI…PVFH), 120–140 (ILLA…LIIA), and 162–182 (VLMN…VLLI).

This sequence belongs to the PlsY family. In terms of assembly, probably interacts with PlsX.

The protein localises to the cell inner membrane. The catalysed reaction is an acyl phosphate + sn-glycerol 3-phosphate = a 1-acyl-sn-glycero-3-phosphate + phosphate. It participates in lipid metabolism; phospholipid metabolism. Functionally, catalyzes the transfer of an acyl group from acyl-phosphate (acyl-PO(4)) to glycerol-3-phosphate (G3P) to form lysophosphatidic acid (LPA). This enzyme utilizes acyl-phosphate as fatty acyl donor, but not acyl-CoA or acyl-ACP. The protein is Glycerol-3-phosphate acyltransferase of Ralstonia pickettii (strain 12J).